The primary structure comprises 106 residues: Insulin-like peptide 03 (106 aa).

Positions 1–18 (MLFYFGLAVIFLIDSSQT) are cleaved as a signal peptide. A propeptide spanning residues 19–34 (QTLYKVNEVGGSQVDR) is cleaved from the precursor. 3 cysteine pairs are disulfide-bonded: C37–C93, C49–C106, and C92–C97. Residues 52 to 82 (KKRQNIPRKYGRDPNNILEKEEFAKRFLRVR) constitute a propeptide, c peptide.

This sequence belongs to the insulin family.

The protein localises to the secreted. Its function is as follows. Insulin decreases blood glucose concentration. May have evolved to activate insulin receptors (INSR) in vertebrates. Molecular docking studies reveals unique interaction with the human insulin receptor. In vivo, insulin-like peptide injection reduces blood glucose levels in two models of zebrafish diabetes (streptozotocin- and glucose-induced). Also shorter swimming distance of zebrafish larvae, an effect which is not observed with human insulin. The chain is Insulin-like peptide 03 from Exaiptasia diaphana (Tropical sea anemone).